The following is a 401-amino-acid chain: Ribosomal RNA large subunit methyltransferase G (401 aa).

This sequence belongs to the methyltransferase superfamily. RlmG family.

It localises to the cytoplasm. It carries out the reaction guanosine(1835) in 23S rRNA + S-adenosyl-L-methionine = N(2)-methylguanosine(1835) in 23S rRNA + S-adenosyl-L-homocysteine + H(+). Specifically methylates the guanine in position 1835 (m2G1835) of 23S rRNA. In Shewanella loihica (strain ATCC BAA-1088 / PV-4), this protein is Ribosomal RNA large subunit methyltransferase G.